The chain runs to 391 residues: Glycosyltransferase afumC (391 aa).

This sequence belongs to the afumC glycosyltransferase family.

It functions in the pathway secondary metabolite biosynthesis. With respect to regulation, activity is significantly decreased by addition of divalent cations such as Mg(2+), Mn(2+), Zn(2+), Ca(2+), Co(2+), Cu(2+), and Ni(2+); while Fe(2+) has little effect. Functionally, glycosyltransferase; part of the gene cluster that mediates the biosynthesis fumihopaside A, a hopane-type glucoside that enhances the thermotolerance and UV resistance of N.fumigata. The first step of fumihopaside A biosynthesis is performed by the squalene hopane cyclase afumA that catalyzes the cyclization of 3S-oxidosqualene into the hopene 21-beta-H-hopane-3-beta,22-diol. The cytochrome P450 monooxygenase afumB is responsible for both hydroxylation at C-24 and oxidations at C-30 of the afumA product. The glycosyltransferase afumC then catalyzes the glycosylation at C-24, using UDP-D-glucose as a donor, to produce fumihopaside A. AfumC is also able to accept UDP-D-galactose and UDP-D-glucuronic acid as donors to yield minor derivatives. Fumihopaside B, another minor derivative produced, is different from fumihopaside A due to the presence of a double bond between C-22 and C-29. The chain is Glycosyltransferase afumC from Aspergillus fumigatus (strain CBS 144.89 / FGSC A1163 / CEA10) (Neosartorya fumigata).